Reading from the N-terminus, the 212-residue chain is Pyridoxine/pyridoxamine 5'-phosphate oxidase (212 aa).

Residues 8–11 (RREY) and Lys-66 contribute to the substrate site. FMN is bound by residues 61-66 (RIVLLK), 76-77 (FT), Arg-82, Lys-83, and Gln-105. The substrate site is built by Tyr-123, Arg-127, and Ser-131. FMN is bound by residues 140–141 (QS) and Trp-185. A substrate-binding site is contributed by 191–193 (RLH). Arg-195 contacts FMN.

The protein belongs to the pyridoxamine 5'-phosphate oxidase family. As to quaternary structure, homodimer. Requires FMN as cofactor.

The enzyme catalyses pyridoxamine 5'-phosphate + O2 + H2O = pyridoxal 5'-phosphate + H2O2 + NH4(+). It carries out the reaction pyridoxine 5'-phosphate + O2 = pyridoxal 5'-phosphate + H2O2. It functions in the pathway cofactor metabolism; pyridoxal 5'-phosphate salvage; pyridoxal 5'-phosphate from pyridoxamine 5'-phosphate: step 1/1. Its pathway is cofactor metabolism; pyridoxal 5'-phosphate salvage; pyridoxal 5'-phosphate from pyridoxine 5'-phosphate: step 1/1. Catalyzes the oxidation of either pyridoxine 5'-phosphate (PNP) or pyridoxamine 5'-phosphate (PMP) into pyridoxal 5'-phosphate (PLP). This chain is Pyridoxine/pyridoxamine 5'-phosphate oxidase, found in Shewanella sp. (strain MR-7).